Consider the following 295-residue polypeptide: Formamidopyrimidine-DNA glycosylase (295 aa).

Pro2 (schiff-base intermediate with DNA) is an active-site residue. Residue Glu3 is the Proton donor of the active site. Catalysis depends on Lys61, which acts as the Proton donor; for beta-elimination activity. Residues His95, Arg117, and Arg159 each contribute to the DNA site. An FPG-type zinc finger spans residues 245-279; that stretch reads HAYGREGEACERCGTPIRRVAFMNRSSYFCPVCQP. The active-site Proton donor; for delta-elimination activity is the Arg269.

Belongs to the FPG family. Monomer. Requires Zn(2+) as cofactor.

It carries out the reaction Hydrolysis of DNA containing ring-opened 7-methylguanine residues, releasing 2,6-diamino-4-hydroxy-5-(N-methyl)formamidopyrimidine.. The catalysed reaction is 2'-deoxyribonucleotide-(2'-deoxyribose 5'-phosphate)-2'-deoxyribonucleotide-DNA = a 3'-end 2'-deoxyribonucleotide-(2,3-dehydro-2,3-deoxyribose 5'-phosphate)-DNA + a 5'-end 5'-phospho-2'-deoxyribonucleoside-DNA + H(+). Functionally, involved in base excision repair of DNA damaged by oxidation or by mutagenic agents. Acts as a DNA glycosylase that recognizes and removes damaged bases. Has a preference for oxidized purines, such as 7,8-dihydro-8-oxoguanine (8-oxoG). Has AP (apurinic/apyrimidinic) lyase activity and introduces nicks in the DNA strand. Cleaves the DNA backbone by beta-delta elimination to generate a single-strand break at the site of the removed base with both 3'- and 5'-phosphates. The chain is Formamidopyrimidine-DNA glycosylase from Nocardioides sp. (strain ATCC BAA-499 / JS614).